The following is a 516-amino-acid chain: Cytochrome P450 1A2 (516 aa).

S69 is a glycosylation site (O-linked (GlcNAc) serine). Residue F226 coordinates substrate. C458 contributes to the heme binding site.

This sequence belongs to the cytochrome P450 family. Interacts with PGRMC1; the interaction requires PGRMC1 homodimerization. Requires heme as cofactor.

Its subcellular location is the endoplasmic reticulum membrane. The protein resides in the microsome membrane. The catalysed reaction is an organic molecule + reduced [NADPH--hemoprotein reductase] + O2 = an alcohol + oxidized [NADPH--hemoprotein reductase] + H2O + H(+). The enzyme catalyses 17beta-estradiol + reduced [NADPH--hemoprotein reductase] + O2 = 2-hydroxy-17beta-estradiol + oxidized [NADPH--hemoprotein reductase] + H2O + H(+). It carries out the reaction 17beta-estradiol + reduced [NADPH--hemoprotein reductase] + O2 = 4-hydroxy-17beta-estradiol + oxidized [NADPH--hemoprotein reductase] + H2O + H(+). It catalyses the reaction estrone + reduced [NADPH--hemoprotein reductase] + O2 = 2-hydroxyestrone + oxidized [NADPH--hemoprotein reductase] + H2O + H(+). The catalysed reaction is estrone + reduced [NADPH--hemoprotein reductase] + O2 = 4-hydroxyestrone + oxidized [NADPH--hemoprotein reductase] + H2O + H(+). The enzyme catalyses cholesterol + reduced [NADPH--hemoprotein reductase] + O2 = 25-hydroxycholesterol + oxidized [NADPH--hemoprotein reductase] + H2O + H(+). It carries out the reaction all-trans-retinol + reduced [NADPH--hemoprotein reductase] + O2 = all-trans-retinal + oxidized [NADPH--hemoprotein reductase] + 2 H2O + H(+). It catalyses the reaction all-trans-retinal + reduced [NADPH--hemoprotein reductase] + O2 = all-trans-retinoate + oxidized [NADPH--hemoprotein reductase] + H2O + 2 H(+). The catalysed reaction is (5Z,8Z,11Z,14Z)-eicosatetraenoate + reduced [NADPH--hemoprotein reductase] + O2 = (14R,15S)-epoxy-(5Z,8Z,11Z)-eicosatrienoate + oxidized [NADPH--hemoprotein reductase] + H2O + H(+). The enzyme catalyses (5Z,8Z,11Z,14Z)-eicosatetraenoate + reduced [NADPH--hemoprotein reductase] + O2 = (14S,15R)-epoxy-(5Z,8Z,11Z)-eicosatrienoate + oxidized [NADPH--hemoprotein reductase] + H2O + H(+). It carries out the reaction (5Z,8Z,11Z,14Z,17Z)-eicosapentaenoate + reduced [NADPH--hemoprotein reductase] + O2 = (17R,18S)-epoxy-(5Z,8Z,11Z,14Z)-eicosatetraenoate + oxidized [NADPH--hemoprotein reductase] + H2O + H(+). It catalyses the reaction (4Z,7Z,10Z,13Z,16Z,19Z)-docosahexaenoate + reduced [NADPH--hemoprotein reductase] + O2 = (19R,20S)-epoxy-(4Z,7Z,10Z,13Z,16Z)-docosapentaenoate + oxidized [NADPH--hemoprotein reductase] + H2O + H(+). The catalysed reaction is (5S)-hydroperoxy-(6E,8Z,11Z,14Z)-eicosatetraenoate = 5-oxo-(6E,8Z,11Z,14Z)-eicosatetraenoate + H2O. The enzyme catalyses (12S)-hydroperoxy-(5Z,8Z,10E,14Z)-eicosatetraenoate = 12-oxo-(5Z,8Z,10E,14Z)-eicosatetraenoate + H2O. It carries out the reaction (15S)-hydroperoxy-(5Z,8Z,11Z,13E)-eicosatetraenoate = 15-oxo-(5Z,8Z,11Z,13E)-eicosatetraenoate + H2O. It catalyses the reaction (13S)-hydroperoxy-(9Z,11E)-octadecadienoate = 13-oxo-(9Z,11E)-octadecadienoate + H2O. The catalysed reaction is (5Z,8Z,11Z,14Z)-eicosatetraenoate + reduced [NADPH--hemoprotein reductase] + O2 = 13-hydroxy-(5Z,8Z,11Z,14Z)-eicosatetraenoate + oxidized [NADPH--hemoprotein reductase] + H2O + H(+). The enzyme catalyses (5Z,8Z,11Z,14Z)-eicosatetraenoate + reduced [NADPH--hemoprotein reductase] + O2 = 19-hydroxy-(5Z,8Z,11Z,14Z)-eicosatetraenoate + oxidized [NADPH--hemoprotein reductase] + H2O + H(+). It carries out the reaction (9Z,12Z)-octadecadienoate + reduced [NADPH--hemoprotein reductase] + O2 = 11-hydroxy-(9Z,12Z)-octadecadienoate + oxidized [NADPH--hemoprotein reductase] + H2O + H(+). The protein operates within cofactor metabolism; retinol metabolism. It participates in steroid metabolism; cholesterol metabolism. It functions in the pathway lipid metabolism; arachidonate metabolism. Functionally, a cytochrome P450 monooxygenase involved in the metabolism of various endogenous substrates, including fatty acids, steroid hormones and vitamins. Mechanistically, uses molecular oxygen inserting one oxygen atom into a substrate, and reducing the second into a water molecule, with two electrons provided by NADPH via cytochrome P450 reductase (NADPH--hemoprotein reductase). Catalyzes the hydroxylation of carbon-hydrogen bonds. Exhibits high catalytic activity for the formation of hydroxyestrogens from estrone (E1) and 17beta-estradiol (E2), namely 2-hydroxy E1 and E2. Metabolizes cholesterol toward 25-hydroxycholesterol, a physiological regulator of cellular cholesterol homeostasis. May act as a major enzyme for all-trans retinoic acid biosynthesis in the liver. Catalyzes two successive oxidative transformation of all-trans retinol to all-trans retinal and then to the active form all-trans retinoic acid. Primarily catalyzes stereoselective epoxidation of the last double bond of polyunsaturated fatty acids (PUFA), displaying a strong preference for the (R,S) stereoisomer. Catalyzes bisallylic hydroxylation and omega-1 hydroxylation of PUFA. May also participate in eicosanoids metabolism by converting hydroperoxide species into oxo metabolites (lipoxygenase-like reaction, NADPH-independent). Plays a role in the oxidative metabolism of xenobiotics. Catalyzes the N-hydroxylation of heterocyclic amines and the O-deethylation of phenacetin. Metabolizes caffeine via N3-demethylation. The chain is Cytochrome P450 1A2 (CYP1A2) from Pongo abelii (Sumatran orangutan).